Reading from the N-terminus, the 335-residue chain is Phenylalanine--tRNA ligase alpha subunit (335 aa).

Glutamate 262 is a Mg(2+) binding site.

This sequence belongs to the class-II aminoacyl-tRNA synthetase family. Phe-tRNA synthetase alpha subunit type 1 subfamily. Tetramer of two alpha and two beta subunits. Mg(2+) is required as a cofactor.

Its subcellular location is the cytoplasm. It carries out the reaction tRNA(Phe) + L-phenylalanine + ATP = L-phenylalanyl-tRNA(Phe) + AMP + diphosphate + H(+). This chain is Phenylalanine--tRNA ligase alpha subunit, found in Prochlorococcus marinus subsp. pastoris (strain CCMP1986 / NIES-2087 / MED4).